A 503-amino-acid chain; its full sequence is MLLEVLNPRHYNVTSMVSEVVPIASIAILLLTGFLLLVWNYEDTSSIPGPSYFLGIGPLISHCRFLWMGIGSACNYYNKMYGEFMRVWVCGEETLIISKSSSMFHVMKHSHYISRFGSKLGLQFIGMHEKGIIFNNNPALWKAVRPFFTKALSGPGLVRMVTICADSITKHLDRLEEVCNDLGYVDVLTLMRRIMLDTSNILFLGIPLDESAIVVKIQGYFDAWQALLLKPDIFFKISWLCRKYEKSVKDLKDAMEILIEEKRHRISTAEKLEDCIDFATELIFAEKRGELTKENVNQCILEMLIAAPDTMSVSVFFMLFLIAKHPQVEEAMMREIQTVVGERDIRIDDMQKLKVVENFINESMRYQPVVDLVMRKALEDDVIDGYPVKKGTNIILNLGRMHRLEFFPKPNEFTLENFAKNVPYRYFQPFGFGPRACAGKYIAMVMMKVILVTLLRRFHVQTLQGRCVEKMQKKNDLSLHPDETSDRLEMIFIPRNSDKCLEC.

Transmembrane regions (helical) follow at residues 19 to 39 (EVVP…LLVW), 53 to 73 (FLGI…IGSA), and 303 to 323 (MLIA…FLIA). The substrate site is built by Asp-309 and Met-374. Cys-437 is a heme binding site.

It belongs to the cytochrome P450 family. Heme serves as cofactor.

It localises to the endoplasmic reticulum membrane. The protein resides in the microsome membrane. It carries out the reaction testosterone + 3 reduced [NADPH--hemoprotein reductase] + 3 O2 = 17beta-estradiol + formate + 3 oxidized [NADPH--hemoprotein reductase] + 4 H2O + 4 H(+). It catalyses the reaction androst-4-ene-3,17-dione + 3 reduced [NADPH--hemoprotein reductase] + 3 O2 = estrone + formate + 3 oxidized [NADPH--hemoprotein reductase] + 4 H2O + 4 H(+). The catalysed reaction is androst-4-ene-3,17-dione + reduced [NADPH--hemoprotein reductase] + O2 = 19-hydroxyandrost-4-ene-3,17-dione + oxidized [NADPH--hemoprotein reductase] + H2O + H(+). The enzyme catalyses 19-hydroxyandrost-4-ene-3,17-dione + reduced [NADPH--hemoprotein reductase] + O2 = 19-oxo-androst-4-ene-3,17-dione + oxidized [NADPH--hemoprotein reductase] + 2 H2O + H(+). It carries out the reaction 19-oxo-androst-4-ene-3,17-dione + reduced [NADPH--hemoprotein reductase] + O2 = estrone + formate + oxidized [NADPH--hemoprotein reductase] + H2O + 2 H(+). It catalyses the reaction estrone + reduced [NADPH--hemoprotein reductase] + O2 = 2-hydroxyestrone + oxidized [NADPH--hemoprotein reductase] + H2O + H(+). The catalysed reaction is 17beta-hydroxy-5alpha-androstan-3-one + reduced [NADPH--hemoprotein reductase] + O2 = 17beta,19-dihydroxy-3-oxo-5alpha-androstanone + oxidized [NADPH--hemoprotein reductase] + H2O + H(+). The enzyme catalyses 17beta,19-dihydroxy-3-oxo-5alpha-androstanone + reduced [NADPH--hemoprotein reductase] + O2 = 17beta-hydroxy-3,19-dioxo-5alpha-androstanone + oxidized [NADPH--hemoprotein reductase] + 2 H2O + H(+). It carries out the reaction 17beta-hydroxy-3,19-dioxo-5alpha-androstanone + reduced [NADPH--hemoprotein reductase] + O2 = 17beta-hydroxy-3-oxo-19-nor-5alpha-androst-1-ene + formate + oxidized [NADPH--hemoprotein reductase] + H2O + 2 H(+). It participates in steroid hormone biosynthesis. Its function is as follows. A cytochrome P450 monooxygenase that catalyzes the conversion of C19 androgens, androst-4-ene-3,17-dione (androstenedione) and testosterone to the C18 estrogens, estrone and estradiol, respectively. Catalyzes three successive oxidations of C19 androgens: two conventional oxidations at C19 yielding 19-hydroxy and 19-oxo/19-aldehyde derivatives, followed by a third oxidative aromatization step that involves C1-beta hydrogen abstraction combined with cleavage of the C10-C19 bond to yield a phenolic A ring and formic acid. Alternatively, the third oxidative reaction yields a 19-norsteroid and formic acid. Converts dihydrotestosterone to delta1,10-dehydro 19-nordihydrotestosterone and may play a role in homeostasis of this potent androgen. Also displays 2-hydroxylase activity toward estrone. Mechanistically, uses molecular oxygen inserting one oxygen atom into a substrate, and reducing the second into a water molecule, with two electrons provided by NADPH via cytochrome P450 reductase (CPR; NADPH-ferrihemoprotein reductase). The chain is Aromatase (CYP19A1) from Capra hircus (Goat).